Here is a 334-residue protein sequence, read N- to C-terminus: Glyceraldehyde-3-phosphate dehydrogenase B (334 aa).

Residues 12–13, Asp-34, and Ser-121 each bind NAD(+); that span reads RI. Residues 149 to 151, Thr-180, 209 to 210, and Arg-232 contribute to the D-glyceraldehyde 3-phosphate site; these read SCT and TG. The Nucleophile role is filled by Cys-150. Asn-314 provides a ligand contact to NAD(+).

Belongs to the glyceraldehyde-3-phosphate dehydrogenase family. Homotetramer.

The enzyme catalyses D-glyceraldehyde 3-phosphate + phosphate + NAD(+) = (2R)-3-phospho-glyceroyl phosphate + NADH + H(+). It functions in the pathway carbohydrate degradation; glycolysis; pyruvate from D-glyceraldehyde 3-phosphate: step 1/5. Its function is as follows. Glyceraldehyde-3-phosphate dehydrogenase; part of the gene cluster that mediates the biosynthesis of heptelidic acid (HA), a sesquiterpene lactone that acts as an inhibitor of glyceraldehyde-3-phosphatedehydrogenase (GAPDH) and a growth inhibitor of the salt-tolerant lactic acid bacteria in soy sauce brewing. The GAPDPH hepG/gdpB shows much higher resistance to HA than the GAPDH gpdA located outside of the cluster, but it does not seem to act in self-resistance. This Aspergillus oryzae (strain ATCC 42149 / RIB 40) (Yellow koji mold) protein is Glyceraldehyde-3-phosphate dehydrogenase B.